Here is a 556-residue protein sequence, read N- to C-terminus: CTP synthase (556 aa).

Positions 1-266 (MKYIFVTGGV…GKVVEDLLGL (266 aa)) are amidoligase domain. Position 12 (Ser12) interacts with CTP. UTP is bound at residue Ser12. 13–18 (SLGKGV) is a binding site for ATP. L-glutamine is bound at residue Tyr53. Asp70 serves as a coordination point for ATP. 2 residues coordinate Mg(2+): Asp70 and Glu140. Residues 147-149 (DIE), 187-192 (KTKPTQ), and Lys223 each bind CTP. UTP contacts are provided by residues 187–192 (KTKPTQ) and Lys223. A Glutamine amidotransferase type-1 domain is found at 291-544 (TIAIAGKYTE…VKAALRGQSS (254 aa)). L-glutamine is bound at residue Gly356. The active-site Nucleophile; for glutamine hydrolysis is the Cys383. Residues 384–387 (LGMQ), Glu407, and Arg467 contribute to the L-glutamine site. Active-site residues include His517 and Glu519.

It belongs to the CTP synthase family. As to quaternary structure, homotetramer.

It carries out the reaction UTP + L-glutamine + ATP + H2O = CTP + L-glutamate + ADP + phosphate + 2 H(+). The enzyme catalyses L-glutamine + H2O = L-glutamate + NH4(+). The catalysed reaction is UTP + NH4(+) + ATP = CTP + ADP + phosphate + 2 H(+). It participates in pyrimidine metabolism; CTP biosynthesis via de novo pathway; CTP from UDP: step 2/2. Allosterically activated by GTP, when glutamine is the substrate; GTP has no effect on the reaction when ammonia is the substrate. The allosteric effector GTP functions by stabilizing the protein conformation that binds the tetrahedral intermediate(s) formed during glutamine hydrolysis. Inhibited by the product CTP, via allosteric rather than competitive inhibition. Catalyzes the ATP-dependent amination of UTP to CTP with either L-glutamine or ammonia as the source of nitrogen. Regulates intracellular CTP levels through interactions with the four ribonucleotide triphosphates. The sequence is that of CTP synthase from Deinococcus deserti (strain DSM 17065 / CIP 109153 / LMG 22923 / VCD115).